A 475-amino-acid polypeptide reads, in one-letter code: Ribulose bisphosphate carboxylase large chain (475 aa).

Residues 1–2 (MS) constitute a propeptide that is removed on maturation. Proline 3 carries the N-acetylproline modification. At lysine 14 the chain carries N6,N6,N6-trimethyllysine. The substrate site is built by asparagine 123 and threonine 173. The active-site Proton acceptor is lysine 175. Lysine 177 is a binding site for substrate. Residues lysine 201, aspartate 203, and glutamate 204 each contribute to the Mg(2+) site. Lysine 201 bears the N6-carboxylysine mark. The active-site Proton acceptor is the histidine 294. 3 residues coordinate substrate: arginine 295, histidine 327, and serine 379.

This sequence belongs to the RuBisCO large chain family. Type I subfamily. Heterohexadecamer of 8 large chains and 8 small chains; disulfide-linked. The disulfide link is formed within the large subunit homodimers. Mg(2+) serves as cofactor. The disulfide bond which can form in the large chain dimeric partners within the hexadecamer appears to be associated with oxidative stress and protein turnover.

Its subcellular location is the plastid. The protein localises to the chloroplast. It carries out the reaction 2 (2R)-3-phosphoglycerate + 2 H(+) = D-ribulose 1,5-bisphosphate + CO2 + H2O. It catalyses the reaction D-ribulose 1,5-bisphosphate + O2 = 2-phosphoglycolate + (2R)-3-phosphoglycerate + 2 H(+). Functionally, ruBisCO catalyzes two reactions: the carboxylation of D-ribulose 1,5-bisphosphate, the primary event in carbon dioxide fixation, as well as the oxidative fragmentation of the pentose substrate in the photorespiration process. Both reactions occur simultaneously and in competition at the same active site. In Carpinus caroliniana (American hornbeam), this protein is Ribulose bisphosphate carboxylase large chain.